Reading from the N-terminus, the 201-residue chain is Ribosome maturation factor RimP (201 aa).

Belongs to the RimP family.

The protein resides in the cytoplasm. Its function is as follows. Required for maturation of 30S ribosomal subunits. The protein is Ribosome maturation factor RimP of Acidobacterium capsulatum (strain ATCC 51196 / DSM 11244 / BCRC 80197 / JCM 7670 / NBRC 15755 / NCIMB 13165 / 161).